Here is a 227-residue protein sequence, read N- to C-terminus: Glutathione S-transferase U13 (227 aa).

A GST N-terminal domain is found at 5–86; sequence DTVKLIGSWS…YVDEAWPSVP (82 aa). Residues 15–16, 43–44, 57–58, and 70–71 each bind glutathione; these read SP, EK, KV, and ES. The region spanning 92 to 224 is the GST C-terminal domain; that stretch reads DAYDRASARF…EVVAFAKQKF (133 aa). The residue at position 158 (Thr-158) is a Phosphothreonine.

Belongs to the GST superfamily. Tau family.

Its subcellular location is the cytoplasm. The protein resides in the cytosol. The enzyme catalyses RX + glutathione = an S-substituted glutathione + a halide anion + H(+). Its function is as follows. In vitro, possesses glutathione S-transferase activity toward 1-chloro-2,4-dinitrobenzene (CDNB) and benzyl isothiocyanate (BITC). May be involved in the conjugation of reduced glutathione to a wide number of exogenous and endogenous hydrophobic electrophiles and have a detoxification role against certain herbicides. The chain is Glutathione S-transferase U13 (GSTU13) from Arabidopsis thaliana (Mouse-ear cress).